The following is a 220-amino-acid chain: Putative tyrosine-protein phosphatase 1 (220 aa).

Residues 67 to 218 (FKVPLNAELF…LLARKHVRGQ (152 aa)) enclose the Tyrosine-protein phosphatase domain.

This sequence belongs to the protein-tyrosine phosphatase family. Non-receptor class CDC14 subfamily.

The enzyme catalyses O-phospho-L-tyrosyl-[protein] + H2O = L-tyrosyl-[protein] + phosphate. Could be inactive as the active site cysteine is modified to tryptophan. This is Putative tyrosine-protein phosphatase 1 (PTP-1) from Orgyia pseudotsugata multicapsid polyhedrosis virus (OpMNPV).